Here is a 412-residue protein sequence, read N- to C-terminus: MRPVPGPSVFWGAGSRLPAPLVARAHRLLRTRRANPARGASRITKDMNYWDYIHVEELLALQGGFDDDEQKVGNDEALFIVVHQIYELWFKLILRELTSARELFRQNPVPDQKLASAARSFRRVVTIFEQAIEHFRVMETLTTRDYLDFRDRLIPASGFQSAQLREIELLLGLDDALRIPLGREGSYKEALKTADGAPSAATRRVEARLASGPSLKHFLDEWLSRTPIDGSSEPEGVVGFLRSYTRSMRQENERRVQMAIDKALTPPDVERLRARYEAESAAAEAFLLAEDDPAADAATREKRRAVRAAIVFIESYRELPRLAWPREVLDRILEMEQAMLIWRQRHARMVERVIGRRTGTGGSAGVDYLDQTALRYRVFGDLWTVRSLLLRKPSVPEIEHASDYGFRVEDSP.

Substrate is bound by residues 79-83 (FIVVH), tyrosine 146, and arginine 150. Residue histidine 346 coordinates heme. Threonine 360 serves as a coordination point for substrate.

The protein belongs to the tryptophan 2,3-dioxygenase family. In terms of assembly, homotetramer. Requires heme as cofactor.

The enzyme catalyses L-tryptophan + O2 = N-formyl-L-kynurenine. Its pathway is amino-acid degradation; L-tryptophan degradation via kynurenine pathway; L-kynurenine from L-tryptophan: step 1/2. In terms of biological role, heme-dependent dioxygenase that catalyzes the oxidative cleavage of the L-tryptophan (L-Trp) pyrrole ring and converts L-tryptophan to N-formyl-L-kynurenine. Catalyzes the oxidative cleavage of the indole moiety. In Sorangium cellulosum (strain So ce56) (Polyangium cellulosum (strain So ce56)), this protein is Tryptophan 2,3-dioxygenase.